The sequence spans 215 residues: UPF0502 protein YceH (215 aa).

Residue K80 is modified to N6-acetyllysine.

Belongs to the UPF0502 family.

This is UPF0502 protein YceH from Shigella flexneri serotype 5b (strain 8401).